Consider the following 271-residue polypeptide: 4,5-DOPA dioxygenase extradiol (271 aa).

Residues His22, His57, His177, and His234 each contribute to the Zn(2+) site.

Belongs to the DODA-type extradiol aromatic ring-opening dioxygenase family. In terms of assembly, monomer. It depends on Zn(2+) as a cofactor.

It is found in the cytoplasm. The catalysed reaction is L-dopa + O2 = 4-(L-alanin-3-yl)-2-hydroxy-cis,cis-muconate 6-semialdehyde + H(+). In terms of biological role, in vitro, opens the cyclic ring of dihydroxy-phenylalanine (DOPA) between carbons 4 and 5, thus producing an unstable seco-DOPA that rearranges nonenzymatically to betalamic acid. The physiological substrate is unknown. This Escherichia coli (strain K12) protein is 4,5-DOPA dioxygenase extradiol (ygiD).